Reading from the N-terminus, the 511-residue chain is Histidine ammonia-lyase (511 aa).

A cross-link (5-imidazolinone (Ala-Gly)) is located at residues 142 to 144 (ASG). S143 is modified (2,3-didehydroalanine (Ser)).

Belongs to the PAL/histidase family. In terms of processing, contains an active site 4-methylidene-imidazol-5-one (MIO), which is formed autocatalytically by cyclization and dehydration of residues Ala-Ser-Gly.

It localises to the cytoplasm. It catalyses the reaction L-histidine = trans-urocanate + NH4(+). It functions in the pathway amino-acid degradation; L-histidine degradation into L-glutamate; N-formimidoyl-L-glutamate from L-histidine: step 1/3. The sequence is that of Histidine ammonia-lyase from Brucella ovis (strain ATCC 25840 / 63/290 / NCTC 10512).